The primary structure comprises 175 residues: Large ribosomal subunit protein bL9 (175 aa).

Belongs to the bacterial ribosomal protein bL9 family.

Binds to the 23S rRNA. This chain is Large ribosomal subunit protein bL9, found in Orientia tsutsugamushi (strain Boryong) (Rickettsia tsutsugamushi).